We begin with the raw amino-acid sequence, 358 residues long: Guanidino acid hydrolase, mitochondrial (358 aa).

The transit peptide at 1–36 directs the protein to the mitochondrion; that stretch reads MLRLLRSSWARGLGSGVATWRPSAGLFRPGCPGIRQ. Residues 31–56 form a disordered region; sequence CPGIRQASGASDTPHHQSPSSESPVQ. The span at 46-56 shows a compositional bias: low complexity; the sequence is HQSPSSESPVQ. Gln-168 and His-193 together coordinate Mn(2+). Lys-199 is modified (N6-acetyllysine). Lys-223 carries the N6-acetyllysine; alternate modification. Position 223 is an N6-succinyllysine; alternate (Lys-223). Asp-284 contributes to the Mn(2+) binding site.

It belongs to the arginase family. Agmatinase subfamily. It depends on Mn(2+) as a cofactor. Detected only in liver.

The protein localises to the mitochondrion. The catalysed reaction is 3-guanidinopropanoate + H2O = urea + beta-alanine. It carries out the reaction 4-guanidinobutanoate + H2O = urea + 4-aminobutanoate. It catalyses the reaction taurocyamine + H2O = urea + taurine. The enzyme catalyses L-arginine + H2O = urea + L-ornithine. It participates in nitrogen metabolism; urea cycle; L-ornithine and urea from L-arginine: step 1/1. Hydrolyzes linear guanidino acids to form urea and the corresponding amines. Displays specificity for substrates having a negatively charged head group and short chains including taurocyamine, guanidino propanoic and butanoic acids. May protect cells by detoxifying potentially harmful amounts of guanidino acids. Metabolizes L-arginine with low efficiency. The sequence is that of Guanidino acid hydrolase, mitochondrial (Agmat) from Mus musculus (Mouse).